The primary structure comprises 632 residues: 1,4-alpha-glucan branching enzyme GlgB (632 aa).

The active-site Nucleophile is the Asp310. The active-site Proton donor is Glu363.

This sequence belongs to the glycosyl hydrolase 13 family. GlgB subfamily. In terms of assembly, monomer.

It carries out the reaction Transfers a segment of a (1-&gt;4)-alpha-D-glucan chain to a primary hydroxy group in a similar glucan chain.. It functions in the pathway glycan biosynthesis; glycogen biosynthesis. Functionally, catalyzes the formation of the alpha-1,6-glucosidic linkages in glycogen by scission of a 1,4-alpha-linked oligosaccharide from growing alpha-1,4-glucan chains and the subsequent attachment of the oligosaccharide to the alpha-1,6 position. The chain is 1,4-alpha-glucan branching enzyme GlgB from Desulfitobacterium hafniense (strain Y51).